A 448-amino-acid polypeptide reads, in one-letter code: C4-dicarboxylate transport protein (448 aa).

Helical transmembrane passes span 13–33, 49–69, 81–101, 149–169, 193–213, 227–247, 294–314, 336–356, and 357–377; these read SLYA…HFYP, LIKM…IAGM, LALL…LLVV, AFAK…GFAL, IVGI…AFTI, LMGA…GIVS, VVGL…SIYL, TLLA…GSGF, and IVLA…LALI.

Belongs to the dicarboxylate/amino acid:cation symporter (DAACS) (TC 2.A.23) family.

It localises to the cell inner membrane. Its function is as follows. Responsible for the transport of dicarboxylates such as succinate, fumarate, and malate from the periplasm across the membrane. This chain is C4-dicarboxylate transport protein, found in Albidiferax ferrireducens (strain ATCC BAA-621 / DSM 15236 / T118) (Rhodoferax ferrireducens).